The following is a 388-amino-acid chain: Putative nickel insertion protein (388 aa).

The protein belongs to the LarC family.

This is Putative nickel insertion protein from Geobacter sulfurreducens (strain ATCC 51573 / DSM 12127 / PCA).